We begin with the raw amino-acid sequence, 157 residues long: Phosphopantetheine adenylyltransferase (157 aa).

Ser-9 provides a ligand contact to substrate. ATP-binding positions include 9–10 and His-17; that span reads SF. Substrate is bound by residues Lys-41, Thr-73, and Arg-87. ATP is bound by residues 88–90, Glu-98, and 122–128; these read GIR and YQDISSS.

Belongs to the bacterial CoaD family. As to quaternary structure, homohexamer. It depends on Mg(2+) as a cofactor.

The protein resides in the cytoplasm. The catalysed reaction is (R)-4'-phosphopantetheine + ATP + H(+) = 3'-dephospho-CoA + diphosphate. The protein operates within cofactor biosynthesis; coenzyme A biosynthesis; CoA from (R)-pantothenate: step 4/5. Reversibly transfers an adenylyl group from ATP to 4'-phosphopantetheine, yielding dephospho-CoA (dPCoA) and pyrophosphate. The protein is Phosphopantetheine adenylyltransferase of Oenococcus oeni (strain ATCC BAA-331 / PSU-1).